We begin with the raw amino-acid sequence, 516 residues long: Nucleolar complex protein 4 homolog (516 aa).

3 consecutive transmembrane segments (helical) span residues 296–316, 347–367, and 375–395; these read SACDVGGAISLLALNGLFILI, FFHLADLFLSSSHLPAYLVAA, and LALTAPPEALLMVLPLICNLL.

This sequence belongs to the CBF/MAK21 family.

The protein resides in the nucleus membrane. The protein localises to the nucleus. It localises to the nucleolus. The polypeptide is Nucleolar complex protein 4 homolog (Noc4l) (Rattus norvegicus (Rat)).